The following is a 251-amino-acid chain: MIKVSVVGAKGRMGLHVVEAVNNAEDTQLALALDAGDDLTQITTDNTDVVVEFTVPSVSLNNVLTLIGQGVDVVVGTTGWTDEKLAQVKSAIANGPKPETQKVFIAPNFAISAVLADYFATKAAKYFESAEVIELHHPTKVDAPSGTAIHTAHGIAEARKAAGLAPVPDATETDGGSRGQVVDGIHVHAVRLRGLNAHEEVLFGNAGEQLTIRADSFDRTSFMPGVLLAVRKLAGDAPAGLTIGLDHFLDL.

Residues 8–13 (GAKGRM), 76–78 (GTT), and 106–109 (APNF) each bind NAD(+). Catalysis depends on His-136, which acts as the Proton donor/acceptor. His-137 lines the (S)-2,3,4,5-tetrahydrodipicolinate pocket. Lys-140 acts as the Proton donor in catalysis. Residue 146 to 147 (GT) coordinates (S)-2,3,4,5-tetrahydrodipicolinate.

Belongs to the DapB family.

Its subcellular location is the cytoplasm. It catalyses the reaction (S)-2,3,4,5-tetrahydrodipicolinate + NAD(+) + H2O = (2S,4S)-4-hydroxy-2,3,4,5-tetrahydrodipicolinate + NADH + H(+). The enzyme catalyses (S)-2,3,4,5-tetrahydrodipicolinate + NADP(+) + H2O = (2S,4S)-4-hydroxy-2,3,4,5-tetrahydrodipicolinate + NADPH + H(+). The protein operates within amino-acid biosynthesis; L-lysine biosynthesis via DAP pathway; (S)-tetrahydrodipicolinate from L-aspartate: step 4/4. Catalyzes the conversion of 4-hydroxy-tetrahydrodipicolinate (HTPA) to tetrahydrodipicolinate. The protein is 4-hydroxy-tetrahydrodipicolinate reductase of Bifidobacterium longum (strain NCC 2705).